Consider the following 21-residue polypeptide: Protopolybiakinin-1 (21 aa).

Residues 1-11 (DKNKKPIRVGG) are compositionally biased toward basic residues. The disordered stretch occupies residues 1-21 (DKNKKPIRVGGRRPPGFTPFR).

It belongs to the bradykinin-related peptide family. As to expression, expressed by the venom gland.

It localises to the secreted. Its function is as follows. Causes constriction of the isolated rat ileum muscles (is 13-fold less potent than bradykinin (BK)), as well as degranulation of mast cells (is 7-fold more potent than BK). In vivo, causes algesic effects. Muscle constriction and algesic effects are partially mediated by bradykinin receptors B2 (BDKRB2). The chain is Protopolybiakinin-1 from Protopolybia exigua (Neotropical social wasp).